Reading from the N-terminus, the 357-residue chain is G-protein coupled receptor 183 (357 aa).

At 1–27 the chain is on the extracellular side; the sequence is MANNFTTPLATSHGNNCDLYAHHSTAR. A glycan (N-linked (GlcNAc...) asparagine) is linked at N4. The helical transmembrane segment at 28–53 threads the bilayer; the sequence is VLMPLHYSLVFIIGLVGNLLALVVIV. Over 54-73 the chain is Cytoplasmic; sequence QNRKKINSTTLYSMNLVISD. A helical transmembrane segment spans residues 74–91; the sequence is ILFTTALPTRIAYYALGF. A 7alpha,25-dihydroxycholesterol-binding site is contributed by R83. The Extracellular portion of the chain corresponds to 92–101; sequence DWRIGDALCR. Residues C100 and C177 are joined by a disulfide bond. A helical transmembrane segment spans residues 102–123; it reads VTALVFYINTYAGVNFMTCLSI. Residues Y108 and Y112 each contribute to the 7alpha,25-dihydroxycholesterol site. The tract at residues 122–130 is interaction with G proteins; it reads SIDRFFAVV. Residues 124–145 lie on the Cytoplasmic side of the membrane; the sequence is DRFFAVVHPLRYNKIKRIEYAK. A helical transmembrane segment spans residues 146–164; sequence GVCLSVWILVFAQTLPLLL. Topologically, residues 165–188 are extracellular; it reads TPMSKEEGDKTTCMEYPNFEGTAS. A helical membrane pass occupies residues 189-211; the sequence is LPWILLGACLLGYVLPITVILLC. Residues 212-237 are Cytoplasmic-facing; that stretch reads YSQICCKLFRTAKQNPLTEKSGVNKK. Residues 238–261 form a helical membrane-spanning segment; it reads ALNTIILIIVVFILCFTPYHVAII. 7alpha,25-dihydroxycholesterol is bound at residue Y256. Over 262–283 the chain is Extracellular; sequence QHMIKMLCSPGALECGARHSFQ. The chain crosses the membrane as a helical span at residues 284–308; that stretch reads ISLHFTVCLMNFNCCMDPFIYFFAC. The Cytoplasmic portion of the chain corresponds to 309 to 357; that stretch reads KGYKRKVMKMLKRQVSVSISSAVRSAPEENSREMTESQMMIHSKASNGR. A phosphoserine mark is found at S324 and S345. Residues 336–357 form a disordered region; the sequence is EENSREMTESQMMIHSKASNGR. Polar residues predominate over residues 344–357; that stretch reads ESQMMIHSKASNGR.

This sequence belongs to the G-protein coupled receptor 1 family. Homodimer and heterodimer. Heterodimerizes with CXCR5; leading to modulate the interaction between of CXCL13 and CXCR5. As to expression, expressed in mature B-cells and increases in expression early after activation, before being down-regulated in germinal center B-cells. Expressed in astrocytes. Specifically expressed in CD4(+) dendritic cells but not in CD8(+) dendritic cells. Expressed in monocyte/osteoclasts precursors and mature osteoclasts.

Its subcellular location is the cell membrane. Functionally, G-protein coupled receptor expressed in lymphocytes that acts as a chemotactic receptor for B-cells, T-cells, splenic dendritic cells, monocytes/macrophages and astrocytes. Receptor for oxysterol 7-alpha,25-dihydroxycholesterol (7-alpha,25-OHC) and other related oxysterols. Mediates cell positioning and movement of a number of cells by binding the 7-alpha,25-OHC ligand that forms a chemotactic gradient. Binding of 7-alpha,25-OHC mediates the correct localization of B-cells during humoral immune responses. Collaborates with CXCR5 to mediate B-cell migration; probably by forming a heterodimer with CXCR5 that affects the interaction between of CXCL13 and CXCR5. Guides B-cell movement along the B-cell zone-T-cell zone boundary and later to interfollicular and outer follicular regions. Its specific expression during B-cell maturation helps position B-cells appropriately for mounting T-dependent antibody responses. Also acts as a chemotactic receptor for some T-cells upon binding to 7-alpha,25-OHC ligand. Promotes follicular helper T (Tfh) cells differentiation by positioning activated T-cells at the follicle-T-zone interface, promoting contact of newly activated CD4 T-cells with activated dendritic cells and exposing them to Tfh-cell-promoting inducible costimulator (ICOS) ligand. Expression in splenic dendritic cells is required for their homeostasis, localization and ability to induce B- and T-cell responses: GPR183 acts as a chemotactic receptor in dendritic cells that mediates the accumulation of CD4(+) dendritic cells in bridging channels. Regulates migration of astrocytes and is involved in communication between astrocytes and macrophages. Promotes osteoclast precursor migration to bone surfaces. Signals constitutively through G(i)-alpha, but not G(s)-alpha or G(q)-alpha. Signals constitutively also via MAPK1/3 (ERK1/2). The sequence is that of G-protein coupled receptor 183 from Mus musculus (Mouse).